A 129-amino-acid chain; its full sequence is ATP synthase epsilon chain (129 aa).

Belongs to the ATPase epsilon chain family. As to quaternary structure, F-type ATPases have 2 components, CF(1) - the catalytic core - and CF(0) - the membrane proton channel. CF(1) has five subunits: alpha(3), beta(3), gamma(1), delta(1), epsilon(1). CF(0) has three main subunits: a, b and c.

The protein resides in the cell inner membrane. Produces ATP from ADP in the presence of a proton gradient across the membrane. The chain is ATP synthase epsilon chain from Campylobacter fetus subsp. fetus (strain 82-40).